An 81-amino-acid polypeptide reads, in one-letter code: Cytochrome b559 subunit alpha (81 aa).

Residues Arg18 and His23 each coordinate heme. Residues 19 to 40 (YWVIHSITIPMLFIAGWLFVST) form a helical membrane-spanning segment.

Belongs to the PsbE/PsbF family. In terms of assembly, heterodimer of an alpha subunit and a beta subunit. PSII is composed of 1 copy each of membrane proteins PsbA, PsbB, PsbC, PsbD, PsbE, PsbF, PsbH, PsbI, PsbJ, PsbK, PsbL, PsbM, PsbT, PsbX, PsbY, PsbZ, Psb30/Ycf12, peripheral proteins PsbO, CyanoQ (PsbQ), PsbU, PsbV and a large number of cofactors. It forms dimeric complexes. Requires heme b as cofactor.

It localises to the cellular thylakoid membrane. In terms of biological role, this b-type cytochrome is tightly associated with the reaction center of photosystem II (PSII). PSII is a light-driven water:plastoquinone oxidoreductase that uses light energy to abstract electrons from H(2)O, generating O(2) and a proton gradient subsequently used for ATP formation. It consists of a core antenna complex that captures photons, and an electron transfer chain that converts photonic excitation into a charge separation. The polypeptide is Cytochrome b559 subunit alpha (Synechocystis sp. (strain ATCC 27184 / PCC 6803 / Kazusa)).